The chain runs to 234 residues: LexA repressor (234 aa).

The H-T-H motif DNA-binding region spans 26–46 (FDEMKDALDLRSKSGIHRLIT). A disordered region spans residues 80 to 107 (RGFTPSVIEGNLGKVRPPSPQHAEDDSD). Catalysis depends on for autocatalytic cleavage activity residues Ser155 and Lys193.

It belongs to the peptidase S24 family. As to quaternary structure, homodimer.

The catalysed reaction is Hydrolysis of Ala-|-Gly bond in repressor LexA.. In terms of biological role, represses a number of genes involved in the response to DNA damage (SOS response), including recA and lexA. In the presence of single-stranded DNA, RecA interacts with LexA causing an autocatalytic cleavage which disrupts the DNA-binding part of LexA, leading to derepression of the SOS regulon and eventually DNA repair. The sequence is that of LexA repressor from Rhodopseudomonas palustris (strain HaA2).